A 216-amino-acid polypeptide reads, in one-letter code: Pyrophosphatase PpaX (216 aa).

Asp-12 functions as the Nucleophile in the catalytic mechanism.

The protein belongs to the HAD-like hydrolase superfamily. PpaX family. The cofactor is Mg(2+).

The enzyme catalyses diphosphate + H2O = 2 phosphate + H(+). Functionally, hydrolyzes pyrophosphate formed during P-Ser-HPr dephosphorylation by HPrK/P. Might play a role in controlling the intracellular pyrophosphate pool. This chain is Pyrophosphatase PpaX, found in Bacillus pumilus (strain SAFR-032).